The sequence spans 602 residues: Elongation factor 4 (602 aa).

The region spanning 7–189 (KRVRNFSIIA…AVVEKVPYPK (183 aa)) is the tr-type G domain. Residues 19 to 24 (DHGKST) and 136 to 139 (NKID) contribute to the GTP site.

This sequence belongs to the TRAFAC class translation factor GTPase superfamily. Classic translation factor GTPase family. LepA subfamily.

The protein resides in the cell membrane. The enzyme catalyses GTP + H2O = GDP + phosphate + H(+). Required for accurate and efficient protein synthesis under certain stress conditions. May act as a fidelity factor of the translation reaction, by catalyzing a one-codon backward translocation of tRNAs on improperly translocated ribosomes. Back-translocation proceeds from a post-translocation (POST) complex to a pre-translocation (PRE) complex, thus giving elongation factor G a second chance to translocate the tRNAs correctly. Binds to ribosomes in a GTP-dependent manner. The sequence is that of Elongation factor 4 from Clostridium tetani (strain Massachusetts / E88).